A 1153-amino-acid polypeptide reads, in one-letter code: Cytosolic carboxypeptidase 1 (1153 aa).

Positions 357–400 are disordered; it reads NQPPGVDDVVDESDENEATEVDTENDTENEEDDTGHKTQNDDIE. Acidic residues predominate over residues 364–389; sequence DVVDESDENEATEVDTENDTENEEDD. One can recognise a Peptidase M14 domain in the interval 774 to 1063; it reads YPYTYSMLKM…QFCLALLRLR (290 aa). Residues H845, E848, and H942 each coordinate Zn(2+). The Proton donor/acceptor role is filled by E1027. Positions 1108–1128 are enriched in acidic residues; that stretch reads AFLEEVDYSAESNDENDPELE. The disordered stretch occupies residues 1108-1153; it reads AFLEEVDYSAESNDENDPELEPDLRDNHALPDPSSDSELSHQDSLT. Over residues 1141–1153 the composition is skewed to polar residues; it reads SSDSELSHQDSLT.

This sequence belongs to the peptidase M14 family. Zn(2+) is required as a cofactor.

It is found in the cytoplasm. It localises to the cytosol. The protein localises to the nucleus. The protein resides in the mitochondrion. It carries out the reaction (L-glutamyl)(n+1)-gamma-L-glutamyl-L-glutamyl-[protein] + H2O = (L-glutamyl)(n)-gamma-L-glutamyl-L-glutamyl-[protein] + L-glutamate. The catalysed reaction is C-terminal L-alpha-aminoacyl-L-glutamyl-L-glutamyl-[tubulin] + H2O = C-terminal L-alpha-aminoacyl-L-glutamyl-[tubulin] + L-glutamate. Metallocarboxypeptidase that mediates protein deglutamylation of tubulin and non-tubulin target proteins. Catalyzes the removal of polyglutamate side chains present on the gamma-carboxyl group of glutamate residues within the C-terminal tail of alpha- and beta-tubulin. Specifically cleaves tubulin long-side-chains, while it is not able to remove the branching point glutamate. Also catalyzes the removal of polyglutamate residues from the carboxy-terminus of alpha-tubulin as well as non-tubulin proteins. The protein is Cytosolic carboxypeptidase 1 (agtpbp1) of Danio rerio (Zebrafish).